Reading from the N-terminus, the 2360-residue chain is Protein Ycf2 (2360 aa).

Disordered stretches follow at residues 172–193 (SSQL…GTED), 225–255 (TEIE…EMNN), and 944–995 (KRKK…KRKE). A compositionally biased stretch (low complexity) spans 234–244 (KGLSGSSSKSR). The segment covering 245-254 (LFTEGEKEMN) has biased composition (basic and acidic residues). Over residues 944-959 (KRKKKKPEKRKKKKPE) the composition is skewed to basic residues. Residues 960-993 (KRKEKKPEKRKEKKPEKRKEKKPEKRKEKKPEKR) are compositionally biased toward basic and acidic residues. 1425–1432 (GSIGSGRS) is an ATP binding site. Disordered stretches follow at residues 1499–1518 (YEDR…YEPG), 1843–2031 (LVGS…LLRP), and 2098–2214 (PAEE…DGFS). A compositionally biased stretch (acidic residues) spans 1849–2011 (TEEEVEGTEE…VEGTEDEEVE (163 aa)). Residues 2012 to 2024 (GTEKDSSQFDNDR) are compositionally biased toward basic and acidic residues. Acidic residues-rich tracts occupy residues 2098–2115 (PAEE…EALE) and 2122–2197 (GEEE…ENDS).

The protein belongs to the Ycf2 family.

Its subcellular location is the plastid. It is found in the chloroplast stroma. Probable ATPase of unknown function. Its presence in a non-photosynthetic plant (Epifagus virginiana) and experiments in tobacco indicate that it has an essential function which is probably not related to photosynthesis. The sequence is that of Protein Ycf2 from Oenothera argillicola (Appalachian evening primrose).